The chain runs to 419 residues: L-rhamnose isomerase (419 aa).

H262, D294, and D296 together coordinate Mn(2+).

It belongs to the rhamnose isomerase family. As to quaternary structure, homotetramer. The cofactor is Mn(2+).

The protein localises to the cytoplasm. It carries out the reaction L-rhamnopyranose = L-rhamnulose. The protein operates within carbohydrate degradation; L-rhamnose degradation; glycerone phosphate from L-rhamnose: step 1/3. Its function is as follows. Catalyzes the interconversion of L-rhamnose and L-rhamnulose. The polypeptide is L-rhamnose isomerase (Shigella flexneri).